The primary structure comprises 629 residues: tRNA uridine 5-carboxymethylaminomethyl modification enzyme MnmG (629 aa).

13–18 (GGGHAG) serves as a coordination point for FAD. Residue 273–287 (GPRYCPSIEDKVNRF) participates in NAD(+) binding.

The protein belongs to the MnmG family. In terms of assembly, homodimer. Heterotetramer of two MnmE and two MnmG subunits. Requires FAD as cofactor.

It localises to the cytoplasm. NAD-binding protein involved in the addition of a carboxymethylaminomethyl (cmnm) group at the wobble position (U34) of certain tRNAs, forming tRNA-cmnm(5)s(2)U34. This chain is tRNA uridine 5-carboxymethylaminomethyl modification enzyme MnmG, found in Hahella chejuensis (strain KCTC 2396).